The sequence spans 619 residues: Zinc finger protein 131 (619 aa).

Positions 34–98 (TDITLIVDGH…TYTAKLMIQG (65 aa)) constitute a BTB domain. Positions 137 to 148 (TGKNEAKKRKIA) match the Nuclear localization signal 1 motif. A Phosphoserine modification is found at Ser231. 3 C2H2-type zinc fingers span residues 261–283 (FHCE…MKSH), 288–311 (FKCE…NCYH), and 328–350 (HICQ…LRKH). Residues Lys289 and Lys295 each participate in a glycyl lysine isopeptide (Lys-Gly) (interchain with G-Cter in SUMO2) cross-link. The short motif at 317–328 (VSKKQRTGKKIH) is the Nuclear localization signal 2 element. The segment at 356 to 381 (FECSNCHERFARNSTLKCHLTACQTG) adopts a C2H2-type 4; degenerate zinc-finger fold. 2 consecutive C2H2-type zinc fingers follow at residues 392–414 (YECQ…LVIH) and 420–443 (NHCT…SDAH). 2 stretches are compositionally biased toward basic and acidic residues: residues 574 to 587 (QEER…AAME) and 595 to 612 (LETK…ENDR). Residues 574-619 (QEEREPNHADAAMEEHEDAEGLETKPSEYSQARKTENDRTSLPVLE) are disordered. Lys598 participates in a covalent cross-link: Glycyl lysine isopeptide (Lys-Gly) (interchain with G-Cter in SUMO).

It belongs to the krueppel C2H2-type zinc-finger protein family. In terms of processing, monosumoylated at Lys-598 by CBX4 and UHRF2. Sumoylation may potentiate ZNF131 inhibition of estrogen signaling. Sumoylation does not interfere with ubiquitination. Ubiquitinated. Ubiquitously expressed. Predominant expression is found in the developing central nervous system with strongest signals in the forebrain, midbrain, and hindbrain areas and in the neural tube.

The protein localises to the nucleus. Functionally, may be involved in transcriptional regulation as a repressor of ESR1/ER-alpha signaling. Plays a role during development and organogenesis as well as in the function of the adult central nervous system. The polypeptide is Zinc finger protein 131 (Znf131) (Mus musculus (Mouse)).